Here is a 248-residue protein sequence, read N- to C-terminus: MGTRLRALLGVLILLVLGGAGWLFLRWEPTLLPIRLIQIEGEVHHHSSQQLQERLTERLHGGILTADLVDLKQTAEELPWVGQATLRRVWPDTLRVQVREYRPIARWSLDGLVTADGIVFRPQGGSIPSNLPLLEGDDKRAPEITARYQAWQAALERVGRGIQRLSVDPRGDWRLKLASGAELRLGTTMVEERLARYLASASQLEAAGRPLTVDLRYSNGFSVKWAPNTDTGVRAHPDRVAARAGNRR.

The Cytoplasmic portion of the chain corresponds to 1 to 4 (MGTR). A helical transmembrane segment spans residues 5–25 (LRALLGVLILLVLGGAGWLFL). Residues 26–248 (RWEPTLLPIR…RVAARAGNRR (223 aa)) are Periplasmic-facing. Residues 32-101 (LPIRLIQIEG…DTLRVQVREY (70 aa)) enclose the POTRA domain.

The protein belongs to the FtsQ/DivIB family. FtsQ subfamily. Part of a complex composed of FtsB, FtsL and FtsQ.

It is found in the cell inner membrane. Essential cell division protein. May link together the upstream cell division proteins, which are predominantly cytoplasmic, with the downstream cell division proteins, which are predominantly periplasmic. May control correct divisome assembly. This is Cell division protein FtsQ from Allochromatium vinosum (strain ATCC 17899 / DSM 180 / NBRC 103801 / NCIMB 10441 / D) (Chromatium vinosum).